The sequence spans 352 residues: Beta-hexosaminidase (352 aa).

Substrate contacts are provided by residues Asp74, Arg82, Arg149, and Lys179–His180. The active-site Proton donor/acceptor is the His192. Asp263 serves as the catalytic Nucleophile.

Belongs to the glycosyl hydrolase 3 family. NagZ subfamily.

It is found in the cytoplasm. The enzyme catalyses Hydrolysis of terminal non-reducing N-acetyl-D-hexosamine residues in N-acetyl-beta-D-hexosaminides.. Its pathway is cell wall biogenesis; peptidoglycan recycling. In terms of biological role, plays a role in peptidoglycan recycling by cleaving the terminal beta-1,4-linked N-acetylglucosamine (GlcNAc) from peptide-linked peptidoglycan fragments, giving rise to free GlcNAc, anhydro-N-acetylmuramic acid and anhydro-N-acetylmuramic acid-linked peptides. The chain is Beta-hexosaminidase from Bordetella pertussis (strain Tohama I / ATCC BAA-589 / NCTC 13251).